A 212-amino-acid polypeptide reads, in one-letter code: 3-demethoxyubiquinol 3-hydroxylase (212 aa).

The disordered stretch occupies residues 21–42 (SRMSRPLPVPQESAVTEAAPEL). 6 residues coordinate Fe cation: Glu-61, Glu-91, His-94, Glu-143, Glu-175, and His-178.

This sequence belongs to the COQ7 family. It depends on Fe cation as a cofactor.

The protein resides in the cell membrane. The catalysed reaction is a 5-methoxy-2-methyl-3-(all-trans-polyprenyl)benzene-1,4-diol + AH2 + O2 = a 3-demethylubiquinol + A + H2O. Its pathway is cofactor biosynthesis; ubiquinone biosynthesis. Functionally, catalyzes the hydroxylation of 2-nonaprenyl-3-methyl-6-methoxy-1,4-benzoquinol during ubiquinone biosynthesis. This is 3-demethoxyubiquinol 3-hydroxylase from Paraburkholderia xenovorans (strain LB400).